We begin with the raw amino-acid sequence, 999 residues long: Ulvan lyase, long isoform (999 aa).

Residues 1-21 (MKCLKTLLVSTTLLGAFSLNA) form the signal peptide. A substrate-binding site is contributed by 126–127 (SH). His-127 serves as the catalytic Proton donor/acceptor. Ca(2+) contacts are provided by Asp-189, Asp-199, and Lys-201. Residues Tyr-280 and Arg-297 each contribute to the substrate site. 3 residues coordinate Ca(2+): Asp-300, Asp-303, and Tyr-305. Tyr-361 lines the substrate pocket.

The protein belongs to the polysaccharide lyase 24 family.

In terms of biological role, ulvan lyase involved in ulvan degradation. Ulvan is the main polysaccharide component of the Ulvales (green seaweed) cell wall. It is composed of disaccharide building blocks comprising 3-sulfated rhamnose (Rha3S) linked to D-glucuronic acid (GlcA), L-iduronic acid (IduA), or D-xylose (Xyl). Ulvan lyase catalyzes preferentially the endolytic cleavage of the glycosidic bond between Rha3S and the uronic acid GlcA, but not IduA, producing oligosaccharides that have unsaturated 4-deoxy-L-threo-hex-4-enopyranosiduronic acid (deltaUA) at the non-reducing end. The most abundant end products in the degradation of the ulvan polysaccharide were deltaUA-Rha3S disaccharides and deltaUA-Rha3S-IduA-Rha3S and deltaUA-Rha3S-Xyl-Rha3S tetrasaccharides. The protein is Ulvan lyase, long isoform of Alteromonas sp.